The following is a 478-amino-acid chain: Protein nucleotidyltransferase YdiU (478 aa).

Residues Gly84, Gly86, Arg87, Lys107, Asp119, Gly120, Arg170, and Arg177 each coordinate ATP. Asp246 serves as the catalytic Proton acceptor. The Mg(2+) site is built by Asn247 and Asp256. Residue Asp256 participates in ATP binding.

Belongs to the SELO family. Mg(2+) serves as cofactor. Mn(2+) is required as a cofactor.

The catalysed reaction is L-seryl-[protein] + ATP = 3-O-(5'-adenylyl)-L-seryl-[protein] + diphosphate. It carries out the reaction L-threonyl-[protein] + ATP = 3-O-(5'-adenylyl)-L-threonyl-[protein] + diphosphate. The enzyme catalyses L-tyrosyl-[protein] + ATP = O-(5'-adenylyl)-L-tyrosyl-[protein] + diphosphate. It catalyses the reaction L-histidyl-[protein] + UTP = N(tele)-(5'-uridylyl)-L-histidyl-[protein] + diphosphate. The catalysed reaction is L-seryl-[protein] + UTP = O-(5'-uridylyl)-L-seryl-[protein] + diphosphate. It carries out the reaction L-tyrosyl-[protein] + UTP = O-(5'-uridylyl)-L-tyrosyl-[protein] + diphosphate. In terms of biological role, nucleotidyltransferase involved in the post-translational modification of proteins. It can catalyze the addition of adenosine monophosphate (AMP) or uridine monophosphate (UMP) to a protein, resulting in modifications known as AMPylation and UMPylation. The chain is Protein nucleotidyltransferase YdiU from Shigella boydii serotype 18 (strain CDC 3083-94 / BS512).